The sequence spans 254 residues: Ribosomal RNA small subunit methyltransferase J (254 aa).

S-adenosyl-L-methionine-binding positions include arginine 106–aspartate 107 and aspartate 177.

This sequence belongs to the methyltransferase superfamily. RsmJ family.

It localises to the cytoplasm. It carries out the reaction guanosine(1516) in 16S rRNA + S-adenosyl-L-methionine = N(2)-methylguanosine(1516) in 16S rRNA + S-adenosyl-L-homocysteine + H(+). In terms of biological role, specifically methylates the guanosine in position 1516 of 16S rRNA. The polypeptide is Ribosomal RNA small subunit methyltransferase J (Nitrosococcus oceani (strain ATCC 19707 / BCRC 17464 / JCM 30415 / NCIMB 11848 / C-107)).